A 359-amino-acid chain; its full sequence is Cytoplasmic tRNA 2-thiolation protein 2 (359 aa).

This sequence belongs to the CTU2/NCS2 family.

The protein localises to the cytoplasm. It functions in the pathway tRNA modification; 5-methoxycarbonylmethyl-2-thiouridine-tRNA biosynthesis. Plays a central role in 2-thiolation of mcm(5)S(2)U at tRNA wobble positions of tRNA(Lys), tRNA(Glu) and tRNA(Gln). May act by forming a heterodimer with NCS6 that ligates sulfur from thiocarboxylated URM1 onto the uridine of tRNAs at wobble position. Prior mcm(5) tRNA modification by the elongator complex is required for 2-thiolation. May also be involved in protein urmylation. This chain is Cytoplasmic tRNA 2-thiolation protein 2, found in Ajellomyces capsulatus (strain NAm1 / WU24) (Darling's disease fungus).